Consider the following 407-residue polypeptide: Multifunctional CCA protein (407 aa).

Residues Gly-8 and Arg-11 each contribute to the ATP site. 2 residues coordinate CTP: Gly-8 and Arg-11. Asp-21 and Asp-23 together coordinate Mg(2+). Residues Arg-91, Arg-137, and Arg-140 each coordinate ATP. Residues Arg-91, Arg-137, and Arg-140 each coordinate CTP. Residues 228–329 enclose the HD domain; the sequence is TGIHTLMVAQ…IKIFDKMDVW (102 aa).

Belongs to the tRNA nucleotidyltransferase/poly(A) polymerase family. Bacterial CCA-adding enzyme type 1 subfamily. In terms of assembly, monomer. Can also form homodimers and oligomers. It depends on Mg(2+) as a cofactor. Ni(2+) serves as cofactor.

It catalyses the reaction a tRNA precursor + 2 CTP + ATP = a tRNA with a 3' CCA end + 3 diphosphate. It carries out the reaction a tRNA with a 3' CCA end + 2 CTP + ATP = a tRNA with a 3' CCACCA end + 3 diphosphate. Its function is as follows. Catalyzes the addition and repair of the essential 3'-terminal CCA sequence in tRNAs without using a nucleic acid template. Adds these three nucleotides in the order of C, C, and A to the tRNA nucleotide-73, using CTP and ATP as substrates and producing inorganic pyrophosphate. tRNA 3'-terminal CCA addition is required both for tRNA processing and repair. Also involved in tRNA surveillance by mediating tandem CCA addition to generate a CCACCA at the 3' terminus of unstable tRNAs. While stable tRNAs receive only 3'-terminal CCA, unstable tRNAs are marked with CCACCA and rapidly degraded. This chain is Multifunctional CCA protein, found in Aliivibrio fischeri (strain ATCC 700601 / ES114) (Vibrio fischeri).